The sequence spans 360 residues: Cyclin-D1-binding protein 1 (360 aa).

A2 is subject to N-acetylalanine. Interaction with TCF3 regions lie at residues A2–V184 and I150–L360. Interaction with RPLP0 stretches follow at residues A2 to E190 and L240 to L360. Residues A2–T208 form a required for interaction with CCND1 region.

It belongs to the CCNDBP1 family. Interacts with CCND1 and GRAP2. May also interact with COPS5, RPLP0, SIRT6, SYF2 and TCF3. Post-translationally, phosphorylated.

The protein localises to the cytoplasm. The protein resides in the nucleus. May negatively regulate cell cycle progression. May act at least in part via inhibition of the cyclin-D1/CDK4 complex, thereby preventing phosphorylation of RB1 and blocking E2F-dependent transcription. The polypeptide is Cyclin-D1-binding protein 1 (CCNDBP1) (Pongo abelii (Sumatran orangutan)).